A 422-amino-acid chain; its full sequence is O-mycaminosyltylonolide 6-deoxyallosyltransferase (422 aa).

It belongs to the glycosyltransferase 28 family.

The catalysed reaction is 5-O-beta-D-mycaminosyltylonolide + dTDP-6-deoxy-alpha-D-allose = demethyllactenocin + dTDP + H(+). In terms of biological role, involved in the biosynthesis of the macrolide antibiotic tylosin derived from the polyketide lactone tylactone. Catalyzes the transfer of 6-deoxy-alpha-D-allose from dTDP-6-deoxy-alpha-D-allose to O-mycaminosyltylonolide (OMT) to yield demethyllactenocin. The sequence is that of O-mycaminosyltylonolide 6-deoxyallosyltransferase from Streptomyces fradiae (Streptomyces roseoflavus).